Here is a 424-residue protein sequence, read N- to C-terminus: UDP-sugar transporter protein SLC35A5 (424 aa).

Topologically, residues 1–8 (MEKQCCSH) are cytoplasmic. The helical transmembrane segment at 9–29 (PVICSLSTMYTFLLGAIFIAL) threads the bilayer. Residues 30 to 53 (SSSRILLVKYSANEENKYDYLPTT) lie on the Lumenal side of the membrane. Residues 54–74 (ANVCSELVKLVFCVLVSFCVI) form a helical membrane-spanning segment. At 75 to 93 (KKDHQSRNLKYASWKEFSN) the chain is on the cytoplasmic side. A helical transmembrane segment spans residues 94–116 (FMKWSIPAFLYFLDNLIVFYVLS). The Lumenal portion of the chain corresponds to 117-119 (YLQ). A helical membrane pass occupies residues 120–142 (PAMAVIFSNFSIITTALLFRIVL). The Cytoplasmic segment spans residues 143–147 (KRRLN). A helical transmembrane segment spans residues 148–168 (WIQWASLLILFLSIVALTAGT). Topologically, residues 169-228 (KTLQHNLAGHGFHHDAFFSPSNSCLLFRSECPRKDNCTAKEWTFPEAKWNTTARVFSHIR) are lumenal. Asn204 carries an N-linked (GlcNAc...) asparagine glycan. Residues 229–249 (LGMGHVLIIVQCFISSMANIY) form a helical membrane-spanning segment. Over 250-263 (NEKILKEGNQLAES) the chain is Cytoplasmic. The chain crosses the membrane as a helical span at residues 264–284 (IFIQNSKLYFFGILFNGLTLG). At 285 to 303 (LQRSNRDQIKNCGFFYGHN) the chain is on the lumenal side. A helical transmembrane segment spans residues 304 to 324 (AFSVALIFVTAFQGLSVAFIL). Topologically, residues 325 to 330 (KFLDNM) are cytoplasmic. A helical membrane pass occupies residues 331–351 (FHVLMAQVTTVIITTVSVLVF). Over 352–354 (DFR) the chain is Lumenal. A helical membrane pass occupies residues 355–375 (PSLEFFLEAPSVLLSIFIYNA). The Cytoplasmic segment spans residues 376–424 (SKPQGPEYAPRQERIRDLSGNLWERSSGDGEELERLTKPKSDESDEDTF). 3 positions are modified to phosphoserine: Ser394, Ser416, and Ser419. Residues 395–424 (GNLWERSSGDGEELERLTKPKSDESDEDTF) are disordered. The span at 408-417 (LERLTKPKSD) shows a compositional bias: basic and acidic residues.

This sequence belongs to the nucleotide-sugar transporter family. SLC35A subfamily. As to quaternary structure, probably forms homooligomers and heterooligomers with SLC35A1, SLC35A2, SLC35A3 and SLC35A4.

Its subcellular location is the golgi apparatus membrane. It carries out the reaction UMP(out) + UDP-alpha-D-glucuronate(in) = UMP(in) + UDP-alpha-D-glucuronate(out). The catalysed reaction is UMP(out) + UDP-N-acetyl-alpha-D-glucosamine(in) = UMP(in) + UDP-N-acetyl-alpha-D-glucosamine(out). The enzyme catalyses UDP-N-acetyl-alpha-D-galactosamine(in) + UMP(out) = UDP-N-acetyl-alpha-D-galactosamine(out) + UMP(in). In terms of biological role, probable UDP-sugar:UMP transmembrane antiporter involved in UDP-alpha-D-glucuronate/UDP-GlcA, UDP-GlcNAc/UDP-N-acetyl-alpha-D-glucosamine and UDP-N-acetyl-alpha-D-galactosamine/UDP-GalNAc transport from the cytosol to the lumen of the Golgi. This Pongo abelii (Sumatran orangutan) protein is UDP-sugar transporter protein SLC35A5.